An 82-amino-acid polypeptide reads, in one-letter code: Omega-conotoxin-like 9 (82 aa).

The first 22 residues, 1–22 (MKLTCMMIAAVLFLTTWTFVTA), serve as a signal peptide directing secretion. Positions 23 to 51 (DDSRYGLKNLFPKARHEMKNPEASKLNKR) are excised as a propeptide. 3 disulfide bridges follow: Cys-54-Cys-69, Cys-61-Cys-73, and Cys-68-Cys-77.

The protein belongs to the conotoxin O1 superfamily. Expressed by the venom duct.

The protein resides in the secreted. In terms of biological role, omega-conotoxins act at presynaptic membranes, they bind and block voltage-gated calcium channels (Cav). In Conus striatus (Striated cone), this protein is Omega-conotoxin-like 9.